The chain runs to 158 residues: Lipoprotein signal peptidase (158 aa).

Helical transmembrane passes span 12–32 (LFWWVAGLALASDRLTKAWIV), 46–66 (IIPGVFHITYVTNTGAAFSLF), and 71–91 (IWLRWLSLIVSLGLITWAILG). Catalysis depends on residues Asp-124 and Asp-140. Residues 135–155 (VFNVADIAINIGIVCLLWSAW) traverse the membrane as a helical segment.

The protein belongs to the peptidase A8 family.

It is found in the cell inner membrane. The catalysed reaction is Release of signal peptides from bacterial membrane prolipoproteins. Hydrolyzes -Xaa-Yaa-Zaa-|-(S,diacylglyceryl)Cys-, in which Xaa is hydrophobic (preferably Leu), and Yaa (Ala or Ser) and Zaa (Gly or Ala) have small, neutral side chains.. The protein operates within protein modification; lipoprotein biosynthesis (signal peptide cleavage). Functionally, this protein specifically catalyzes the removal of signal peptides from prolipoproteins. The protein is Lipoprotein signal peptidase of Thermosynechococcus vestitus (strain NIES-2133 / IAM M-273 / BP-1).